The sequence spans 330 residues: Tryptophan--tRNA ligase (330 aa).

ATP-binding positions include 6–8 and 14–15; these read QPT and GN. The 'HIGH' region signature appears at 7-15; it reads PTGSLHLGN. Residue Asp-130 coordinates L-tryptophan. Residues 142 to 144, Val-185, and 194 to 198 each bind ATP; these read GED and KMSKS. A 'KMSKS' region motif is present at residues 194–198; the sequence is KMSKS.

The protein belongs to the class-I aminoacyl-tRNA synthetase family. Homodimer.

Its subcellular location is the cytoplasm. It carries out the reaction tRNA(Trp) + L-tryptophan + ATP = L-tryptophyl-tRNA(Trp) + AMP + diphosphate + H(+). Its function is as follows. Catalyzes the attachment of tryptophan to tRNA(Trp). This chain is Tryptophan--tRNA ligase, found in Thermosynechococcus vestitus (strain NIES-2133 / IAM M-273 / BP-1).